The chain runs to 415 residues: Histidine--tRNA ligase (415 aa).

Belongs to the class-II aminoacyl-tRNA synthetase family. As to quaternary structure, homodimer.

Its subcellular location is the cytoplasm. It carries out the reaction tRNA(His) + L-histidine + ATP = L-histidyl-tRNA(His) + AMP + diphosphate + H(+). The chain is Histidine--tRNA ligase from Clostridium perfringens (strain SM101 / Type A).